We begin with the raw amino-acid sequence, 263 residues long: MAFLWLLSCWALLGTTFGCGVPAIHPVLSGLSRIVNGEDAVPGSWPWQVSLQDKTGFHFCGGSLISEDWVVTAAHCGVRTSDVVVAGEFDQGSDEENIQVLKIAKVFKNPKFSILTVNNDITLLKLATPARFSQTVSAVCLPSADDDFPAGTLCATTGWGKTKYNANKTPDKLQQAALPLLSNAECKKSWGRRITDVMICAGASGVSSCMGDSGGPLVCQKDGAWTLVGIVSWGSRTCSTTTPAVYARVAKLIPWVQKILAAN.

The signal sequence occupies residues 1–18 (MAFLWLLSCWALLGTTFG). Intrachain disulfides connect C19–C140, C60–C76, C154–C219, C186–C200, and C209–C238. The Peptidase S1 domain maps to 34 to 261 (IVNGEDAVPG…LIPWVQKILA (228 aa)). Residues H75 and D120 each act as charge relay system in the active site. Residue S213 is the Charge relay system of the active site.

It belongs to the peptidase S1 family.

Its subcellular location is the secreted. It is found in the extracellular space. It catalyses the reaction Preferential cleavage: Tyr-|-Xaa, Trp-|-Xaa, Phe-|-Xaa, Leu-|-Xaa.. This Homo sapiens (Human) protein is Chymotrypsinogen B2 (CTRB2).